We begin with the raw amino-acid sequence, 247 residues long: Probable transcriptional regulatory protein GAU_0635 (247 aa).

It belongs to the TACO1 family.

It localises to the cytoplasm. The polypeptide is Probable transcriptional regulatory protein GAU_0635 (Gemmatimonas aurantiaca (strain DSM 14586 / JCM 11422 / NBRC 100505 / T-27)).